We begin with the raw amino-acid sequence, 348 residues long: Serine/threonine-protein kinase SBK2 (348 aa).

Residues 1–25 (MPGKQSEEGPAEAGASEDSEEEGLG) are disordered. Residues 62–330 (YEEVRPLGQG…IREHLGRPWR (269 aa)) form the Protein kinase domain. Residues 68 to 76 (LGQGCYGRV) and lysine 91 each bind ATP. Catalysis depends on aspartate 183, which acts as the Proton acceptor.

This sequence belongs to the protein kinase superfamily. Ser/Thr protein kinase family. STKL subfamily.

The catalysed reaction is L-seryl-[protein] + ATP = O-phospho-L-seryl-[protein] + ADP + H(+). The enzyme catalyses L-threonyl-[protein] + ATP = O-phospho-L-threonyl-[protein] + ADP + H(+). The sequence is that of Serine/threonine-protein kinase SBK2 (SBK2) from Homo sapiens (Human).